The following is a 103-amino-acid chain: Integration host factor subunit beta (103 aa).

Belongs to the bacterial histone-like protein family. As to quaternary structure, heterodimer of an alpha and a beta chain.

In terms of biological role, this protein is one of the two subunits of integration host factor, a specific DNA-binding protein that functions in genetic recombination as well as in transcriptional and translational control. The protein is Integration host factor subunit beta of Sinorhizobium medicae (strain WSM419) (Ensifer medicae).